We begin with the raw amino-acid sequence, 200 residues long: Sperm acrosome developmental regulator (200 aa).

At Ser-63 the chain carries Phosphoserine. The segment covering 167–183 has biased composition (basic residues); the sequence is QERRRRRRMRSHASHTS. The segment at 167–200 is disordered; the sequence is QERRRRRRMRSHASHTSRHSESVQGLKHDARSPL. Positions 184–200 are enriched in basic and acidic residues; that stretch reads RHSESVQGLKHDARSPL.

Its subcellular location is the cytoplasmic vesicle. It is found in the secretory vesicle. It localises to the acrosome. Functionally, may play an important role in acrosome formation and nucleus shaping during spermiogenesis. This chain is Sperm acrosome developmental regulator (Spacdr), found in Rattus norvegicus (Rat).